The following is a 390-amino-acid chain: Elongation factor Tu 1 (390 aa).

The tr-type G domain maps to 10 to 201 (KPHVNVGTIG…LDEYVAVPPR (192 aa)). The interval 19–26 (GHVDHGKT) is G1. Residue 19-26 (GHVDHGKT) participates in GTP binding. Residue Thr-26 participates in Mg(2+) binding. The G2 stretch occupies residues 55–59 (GITIA). Residues 76 to 79 (DCPG) form a G3 region. Residues 76 to 80 (DCPGH) and 131 to 134 (NKAD) each bind GTP. Residues 131 to 134 (NKAD) form a G4 region. The G5 stretch occupies residues 168 to 170 (SAL).

Belongs to the TRAFAC class translation factor GTPase superfamily. Classic translation factor GTPase family. EF-Tu/EF-1A subfamily. Monomer.

Its subcellular location is the cytoplasm. The catalysed reaction is GTP + H2O = GDP + phosphate + H(+). In terms of biological role, GTP hydrolase that promotes the GTP-dependent binding of aminoacyl-tRNA to the A-site of ribosomes during protein biosynthesis. This is Elongation factor Tu 1 from Wolbachia pipientis wMel.